A 448-amino-acid polypeptide reads, in one-letter code: N-succinylarginine dihydrolase (448 aa).

Substrate-binding positions include 19-28 (GGLSYGNVAS), Asn110, and 137-138 (HR). The active site involves Glu174. Arg214 contributes to the substrate binding site. Residue His250 is part of the active site. Residues Asp252 and Asn365 each coordinate substrate. Catalysis depends on Cys371, which acts as the Nucleophile.

The protein belongs to the succinylarginine dihydrolase family. Homodimer.

The catalysed reaction is N(2)-succinyl-L-arginine + 2 H2O + 2 H(+) = N(2)-succinyl-L-ornithine + 2 NH4(+) + CO2. It functions in the pathway amino-acid degradation; L-arginine degradation via AST pathway; L-glutamate and succinate from L-arginine: step 2/5. In terms of biological role, catalyzes the hydrolysis of N(2)-succinylarginine into N(2)-succinylornithine, ammonia and CO(2). In Pseudomonas savastanoi pv. phaseolicola (strain 1448A / Race 6) (Pseudomonas syringae pv. phaseolicola (strain 1448A / Race 6)), this protein is N-succinylarginine dihydrolase.